A 183-amino-acid chain; its full sequence is Ribosome-recycling factor (183 aa).

This sequence belongs to the RRF family.

The protein localises to the cytoplasm. In terms of biological role, responsible for the release of ribosomes from messenger RNA at the termination of protein biosynthesis. May increase the efficiency of translation by recycling ribosomes from one round of translation to another. The sequence is that of Ribosome-recycling factor from Bifidobacterium longum subsp. infantis (strain ATCC 15697 / DSM 20088 / JCM 1222 / NCTC 11817 / S12).